Here is a 1162-residue protein sequence, read N- to C-terminus: Sialidase (1162 aa).

BNR repeat units follow at residues 23–34 (KYSVDDGETWET), 163–174 (FYSEDDGKTWKF), and 209–220 (YESSDMEKPWVE). N342 and N394 each carry an N-linked (GlcNAc...) asparagine glycan. The disordered stretch occupies residues 587–1123 (HMDSSSDSSA…STPSTPAGSS (537 aa)). Over residues 589–615 (DSSSDSSAHSTPSTPADSSAHSTPSTP) the composition is skewed to low complexity. Positions 589–1120 (DSSSDSSAHS…SAHSTPSTPA (532 aa)) are 44 X 12 AA tandem repeats, LTR domain. Polar residues-rich tracts occupy residues 616–689 (VDSS…TPVD) and 699–1123 (PADS…AGSS). An N-linked (GlcNAc...) asparagine glycan is attached at N1125.

Belongs to the glycosyl hydrolase 33 family.

It is found in the cell membrane. It catalyses the reaction Hydrolysis of alpha-(2-&gt;3)-, alpha-(2-&gt;6)-, alpha-(2-&gt;8)- glycosidic linkages of terminal sialic acid residues in oligosaccharides, glycoproteins, glycolipids, colominic acid and synthetic substrates.. In terms of biological role, developmentally regulated neuraminidase implicated in parasite invasion of cells. The chain is Sialidase (TCNA) from Trypanosoma cruzi.